We begin with the raw amino-acid sequence, 205 residues long: Inactive ribonuclease-like protein 9 (205 aa).

Positions 1–26 (MMRTLITTHPLPLLLLPQQLLQLVQF) are cleaved as a signal peptide. 2 cysteine pairs are disulfide-bonded: C116-C168 and C123-C130. N131 and N143 each carry an N-linked (GlcNAc...) asparagine glycan.

The protein belongs to the pancreatic ribonuclease family. At the mRNA level, widely expressed. At protein level, restricted to epididymis. Expressed in spermatozoa (sperm head and neck), with higher levels on ejaculated and epididymal sperm than on testicular sperm (at protein level). Expressed in the epithelial cells of the epididymal tubule (at protein level). Not detected in muscle.

The protein resides in the secreted. Does not exhibit any ribonuclease activity. The protein is Inactive ribonuclease-like protein 9 (RNASE9) of Homo sapiens (Human).